Reading from the N-terminus, the 798-residue chain is Penicillin-binding protein 1A (798 aa).

The Cytoplasmic portion of the chain corresponds to 1–9 (MIKKIITTC). The chain crosses the membrane as a helical; Signal-anchor for type II membrane protein span at residues 10–30 (MGLNNGLALFGVGLIAIAILV). Topologically, residues 31–798 (TYPKLPSLDS…NNRQQLDSLF (768 aa)) are periplasmic. Residues 50–218 (LTIYSSDGQV…SAYNPIVNPE (169 aa)) are transglycosylase. Glu88 serves as the catalytic Proton donor; for transglycosylase activity. Positions 413 to 699 (TVVQEPLLQG…GTIAVPVWVE (287 aa)) are transpeptidase. Residue Ser460 is the Acyl-ester intermediate; for transpeptidase activity of the active site. Positions 734 to 798 (TSSDLALDNS…NNRQQLDSLF (65 aa)) are disordered. Residues 782–798 (LPSNTGNNNRQQLDSLF) are compositionally biased toward polar residues.

This sequence in the N-terminal section; belongs to the glycosyltransferase 51 family. It in the C-terminal section; belongs to the transpeptidase family.

The protein localises to the cell inner membrane. It catalyses the reaction [GlcNAc-(1-&gt;4)-Mur2Ac(oyl-L-Ala-gamma-D-Glu-L-Lys-D-Ala-D-Ala)](n)-di-trans,octa-cis-undecaprenyl diphosphate + beta-D-GlcNAc-(1-&gt;4)-Mur2Ac(oyl-L-Ala-gamma-D-Glu-L-Lys-D-Ala-D-Ala)-di-trans,octa-cis-undecaprenyl diphosphate = [GlcNAc-(1-&gt;4)-Mur2Ac(oyl-L-Ala-gamma-D-Glu-L-Lys-D-Ala-D-Ala)](n+1)-di-trans,octa-cis-undecaprenyl diphosphate + di-trans,octa-cis-undecaprenyl diphosphate + H(+). It carries out the reaction Preferential cleavage: (Ac)2-L-Lys-D-Ala-|-D-Ala. Also transpeptidation of peptidyl-alanyl moieties that are N-acyl substituents of D-alanine.. It functions in the pathway cell wall biogenesis; peptidoglycan biosynthesis. In terms of biological role, cell wall formation. Synthesis of cross-linked peptidoglycan from the lipid intermediates. The enzyme has a penicillin-insensitive transglycosylase N-terminal domain (formation of linear glycan strands) and a penicillin-sensitive transpeptidase C-terminal domain (cross-linking of the peptide subunits). This is Penicillin-binding protein 1A (mrcA) from Neisseria flavescens.